The sequence spans 938 residues: E3 ubiquitin-protein ligase CBL-B (938 aa).

Positions 35–167 are 4H; the sequence is PPKQAAADRR…KAIFPNGQFQ (133 aa). Residues 35-343 form the Cbl-PTB domain; sequence PPKQAAADRR…GRSYNPDLTG (309 aa). The tract at residues 168–240 is EF-hand-like; the sequence is GDNFRITKAD…FEFDIFTRLF (73 aa). Residues aspartate 221, threonine 223, asparagine 225, tyrosine 227, and glutamate 232 each coordinate Ca(2+). The interval 241-343 is SH2-like; the sequence is QPWGSILRNW…GRSYNPDLTG (103 aa). Position 282 is a phosphoserine; by PKC/PRKCQ (serine 282). Arginine 286 serves as a coordination point for 4-O-phospho-L-tyrosine. Positions 344–372 are linker; it reads LCEPTPHDHIKVTQEQYELYCEMGSTFQL. Tyrosine 363 is subject to Phosphotyrosine. Residues 373 to 412 form an RING-type zinc finger; the sequence is CKICAENDKDVKIEPCGHLMCTSCLTAWQESDGQGCPFCR. Residues 465–588 form a disordered region; sequence ASVRKCTDRQ…SVPSRDQPMP (124 aa). Positions 473–486 are enriched in polar residues; sequence RQNSPVTSPGSSPL. 6 positions are modified to phosphoserine: serine 476, serine 480, serine 484, serine 521, serine 525, and serine 529. The tract at residues 543-567 is interaction with VAV1; sequence PLPAPPPPLRDPPPPPERPPPIPPD. Positions 544–566 are enriched in pro residues; the sequence is LPAPPPPLRDPPPPPERPPPIPP. Serine 633 carries the phosphoserine modification. Phosphotyrosine is present on residues tyrosine 664 and tyrosine 708. Disordered stretches follow at residues 702–725 and 771–885; these read EEDD…PSHC and DALP…EAAL. Residues 714 to 724 show a composition bias toward polar residues; sequence HPVSLNSQPSH. Residues 775-784 are compositionally biased toward pro residues; sequence PSLPPPPPPA. Positions 794–804 are enriched in low complexity; the sequence is PPGSSSRPSSG. Residues 839-855 show a composition bias toward polar residues; it reads NRASQDYDQLPSSSDGS. The residue at position 845 (tyrosine 845) is a Phosphotyrosine. The tract at residues 847 to 883 is interaction with SH3KBP1; the sequence is QLPSSSDGSQAPARPPKPRPRRTAPEIHHRKPHGPEA. A compositionally biased stretch (basic residues) spans 862-878; sequence PKPRPRRTAPEIHHRKP. The region spanning 887–926 is the UBA domain; that stretch reads NVDAKIAKLMGEGYAFEEVKRALEIAQNNLEVARSILREF.

Interacts with SH3 domain-containing proteins LCK, CRK and SORBS1. Interacts with LCP2 and ZAP70. Interacts with CBL. Interacts with SH3 domain-containing proteins VAV1, FYN, FGR, PLCG1, GRB2, CRKL, PIK3R1 and SH3KBP1/CIN85. Identified in heterotrimeric complexes with SH3KBP1/CIN85, CD2AP and ARHGEF7, where one CBLB peptide binds two copies of the other protein. Interacts with poly-ubiquitinated proteins. Dimerization is required for the binding of poly-ubiquitin, but not for the binding of mono-ubiquitin. Interacts with EGFR (phosphorylated). Interacts with IFT20. Post-translationally, phosphorylated on tyrosine and serine residues upon TCR or BCR activation, and upon various types of cell stimulation. Auto-ubiquitinated upon EGF-mediated cell activation or upon T-cell costimulation by CD28; which promotes proteasomal degradation.

The protein localises to the cytoplasm. The catalysed reaction is S-ubiquitinyl-[E2 ubiquitin-conjugating enzyme]-L-cysteine + [acceptor protein]-L-lysine = [E2 ubiquitin-conjugating enzyme]-L-cysteine + N(6)-ubiquitinyl-[acceptor protein]-L-lysine.. It participates in protein modification; protein ubiquitination. Functionally, E3 ubiquitin-protein ligase which accepts ubiquitin from specific E2 ubiquitin-conjugating enzymes, and transfers it to substrates, generally promoting their degradation by the proteasome. Negatively regulates TCR (T-cell receptor), BCR (B-cell receptor) and FCER1 (high affinity immunoglobulin epsilon receptor) signal transduction pathways. In naive T-cells, inhibits VAV1 activation upon TCR engagement and imposes a requirement for CD28 costimulation for proliferation and IL-2 production. Also acts by promoting PIK3R1/p85 ubiquitination, which impairs its recruitment to the TCR and subsequent activation. In activated T-cells, inhibits PLCG1 activation and calcium mobilization upon restimulation and promotes anergy. In B-cells, acts by ubiquitinating SYK and promoting its proteasomal degradation. Slightly promotes SRC ubiquitination. May be involved in EGFR ubiquitination and internalization. May be functionally coupled with the E2 ubiquitin-protein ligase UB2D3. In association with CBL, required for proper feedback inhibition of ciliary platelet-derived growth factor receptor-alpha (PDGFRA) signaling pathway via ubiquitination and internalization of PDGFRA. In Rattus norvegicus (Rat), this protein is E3 ubiquitin-protein ligase CBL-B (Cblb).